Reading from the N-terminus, the 380-residue chain is 3-dehydroquinate synthase (380 aa).

NAD(+) contacts are provided by residues 118–122 (GVIGD), 142–143 (TS), K155, and K164. Zn(2+) contacts are provided by E197, H259, and H278.

The protein belongs to the sugar phosphate cyclases superfamily. Dehydroquinate synthase family. Co(2+) serves as cofactor. The cofactor is Zn(2+). It depends on NAD(+) as a cofactor.

Its subcellular location is the cytoplasm. It catalyses the reaction 7-phospho-2-dehydro-3-deoxy-D-arabino-heptonate = 3-dehydroquinate + phosphate. It participates in metabolic intermediate biosynthesis; chorismate biosynthesis; chorismate from D-erythrose 4-phosphate and phosphoenolpyruvate: step 2/7. Its function is as follows. Catalyzes the conversion of 3-deoxy-D-arabino-heptulosonate 7-phosphate (DAHP) to dehydroquinate (DHQ). The chain is 3-dehydroquinate synthase from Sinorhizobium medicae (strain WSM419) (Ensifer medicae).